The following is a 435-amino-acid chain: Monodehydroascorbate reductase 3, cytosolic (435 aa).

FAD is bound by residues 14–17 (GGVA), E41, R48, K53, I96, and 147–148 (RE). Residues 172 to 178 (GGYIGLE), E196, R202, and G261 each bind NAD(+). 174–178 (YIGLE) serves as a coordination point for NADP(+). Positions 202 and 261 each coordinate NADP(+). D298 lines the FAD pocket. 314–315 (EH) contacts NAD(+). 314–315 (EH) serves as a coordination point for NADP(+). V316 contributes to the FAD binding site. R320 provides a ligand contact to L-ascorbate. Y349 is an FAD binding site. NAD(+) is bound at residue Y349. Residue Y349 coordinates NADP(+). R351 is an L-ascorbate binding site.

It belongs to the FAD-dependent oxidoreductase family. FAD is required as a cofactor.

It is found in the cytoplasm. The enzyme catalyses 2 monodehydro-L-ascorbate radical + NADH + H(+) = 2 L-ascorbate + NAD(+). Functionally, catalyzes the conversion of monodehydroascorbate to ascorbate, oxidizing NADH in the process. Ascorbate is a major antioxidant against reactive oxygen species (ROS) and nitric oxide (NO). Can use NADPH as electron donor, but possesses lower activity compared to NADH as electron donor. This chain is Monodehydroascorbate reductase 3, cytosolic, found in Oryza sativa subsp. japonica (Rice).